A 217-amino-acid chain; its full sequence is Ribose-5-phosphate isomerase A (217 aa).

Substrate-binding positions include 28–31, 81–84, and 94–97; these read TGST, DGAD, and KGGG. The Proton acceptor role is filled by E103. A substrate-binding site is contributed by K121.

It belongs to the ribose 5-phosphate isomerase family. In terms of assembly, homodimer.

It catalyses the reaction aldehydo-D-ribose 5-phosphate = D-ribulose 5-phosphate. It functions in the pathway carbohydrate degradation; pentose phosphate pathway; D-ribose 5-phosphate from D-ribulose 5-phosphate (non-oxidative stage): step 1/1. Functionally, catalyzes the reversible conversion of ribose-5-phosphate to ribulose 5-phosphate. In Aeromonas salmonicida (strain A449), this protein is Ribose-5-phosphate isomerase A.